We begin with the raw amino-acid sequence, 197 residues long: HTH-type transcriptional regulator BetI (197 aa).

One can recognise an HTH tetR-type domain in the interval P8–L68. The H-T-H motif DNA-binding region spans S31–F50.

It participates in amine and polyamine biosynthesis; betaine biosynthesis via choline pathway [regulation]. Repressor involved in the biosynthesis of the osmoprotectant glycine betaine. It represses transcription of the choline transporter BetT and the genes of BetAB involved in the synthesis of glycine betaine. This Pseudomonas syringae pv. tomato (strain ATCC BAA-871 / DC3000) protein is HTH-type transcriptional regulator BetI.